Reading from the N-terminus, the 601-residue chain is RNA-binding protein MEX3B (601 aa).

2 disordered regions span residues 1–39 (MPSS…DDQR) and 90–109 (GRQG…ISPT). Position 4 is a phosphoserine (serine 4). A compositionally biased stretch (gly residues) spans 13 to 33 (GSGGGGGGGGGGGGGGSGGGE). KH domains follow at residues 98 to 159 (DGDR…RREI) and 192 to 253 (QTTI…REEI). 2 disordered regions span residues 284 to 332 (LHHG…TDSY) and 344 to 448 (TSRL…GGAS). At serine 320 the chain carries Phosphoserine. Composition is skewed to low complexity over residues 320 to 331 (SSSSLGSASTDS) and 362 to 371 (NGNNNNNGNG). Residues 395 to 404 (DPAPAPPPGT) show a composition bias toward pro residues. The span at 420–442 (AAPVSSSCSSSASSSASSSSVVF) shows a compositional bias: low complexity. Serine 494 is modified (phosphoserine). The tract at residues 514 to 546 (LPGLPSSDTSGSSSSSSSSSSSSSSSSGLRRKG) is disordered. A compositionally biased stretch (low complexity) spans 519–540 (SSDTSGSSSSSSSSSSSSSSSS). The segment at 550–590 (CSVCFESEVIAALVPCGHNLFCMECANRICEKSEPECPVCH) adopts an RING-type zinc-finger fold.

Phosphorylation at Ser-494 creates a docking site for 14-3-3, which stabilizes the protein and modulates its ability to bind RNA.

The protein resides in the cytoplasm. It localises to the nucleus. The protein localises to the P-body. Its subcellular location is the cytoplasmic granule. RNA-binding protein. May be involved in post-transcriptional regulatory mechanisms. This Mus musculus (Mouse) protein is RNA-binding protein MEX3B (Mex3b).